We begin with the raw amino-acid sequence, 66 residues long: Beta-toxin Chui4 (66 aa).

The LCN-type CS-alpha/beta domain occupies 1-66 (KEGYLVELGT…VWPLKNKTCK (66 aa)). Cystine bridges form between Cys12/Cys65, Cys16/Cys41, Cys25/Cys46, and Cys29/Cys48.

The protein belongs to the long (4 C-C) scorpion toxin superfamily. Sodium channel inhibitor family. Beta subfamily. As to expression, expressed by the venom gland.

Its subcellular location is the secreted. Its function is as follows. Beta toxins bind voltage-independently at site-4 of sodium channels (Nav) and shift the voltage of activation toward more negative potentials thereby affecting sodium channel activation and promoting spontaneous and repetitive firing. Acts on human sodium channel Nav1.6/SCN8A. Also able to weakly shift the activation curves of human Nav1.2/SCN2A and Nav1.4/SCN4A. This is Beta-toxin Chui4 from Centruroides huichol (Scorpion).